A 574-amino-acid polypeptide reads, in one-letter code: Streptolysin O (574 aa).

The N-terminal stretch at 1 to 36 (MKDMSNKKIFKKYSRVAGLLTAALIVGNLVTANADS) is a signal peptide. Positions 37-52 (NKQNTANTETTTTNEQ) are enriched in low complexity. Disordered stretches follow at residues 37-64 (NKQNTANTETTTTNEQPKPESSELTTEK) and 84-111 (KEMPLESAEKEEKKSEDNKKSEEDHTEE). The span at 53 to 64 (PKPESSELTTEK) shows a compositional bias: basic and acidic residues. The next 4 beta stranded transmembrane spans lie at 263–276 (KSQIEAALNVNSKI), 283–292 (IDFKSISKGE), 361–370 (SNDVEAAFSA), and 378–390 (KTNGKYSDILENS). A Conserved undecapeptide motif is present at residues 532–542 (ECTGLAWEWWR). Residues 564 to 565 (TL) carry the Cholesterol binding motif.

It belongs to the cholesterol-dependent cytolysin family. In terms of assembly, homooligomeric pore complex of 35 to 50 subunits; when inserted in the host membrane.

It is found in the secreted. It localises to the host cell membrane. Its function is as follows. A cholesterol-dependent toxin that causes cytolysis by forming pores in cholesterol containing host membranes. After binding to target membranes, the protein undergoes a major conformation change, leading to its insertion in the host membrane and formation of an oligomeric pore complex. Cholesterol is required for binding to host membranes, membrane insertion and pore formation; cholesterol binding is mediated by a Thr-Leu pair in the C-terminus. Can be reversibly inactivated by oxidation. The chain is Streptolysin O (slo) from Streptococcus canis.